Reading from the N-terminus, the 30-residue chain is U1-poneritoxin-Ni3b (30 aa).

It belongs to the ponericin-G family. As to expression, expressed by the venom gland.

The protein localises to the secreted. Shows a broad spectrum of activity against both Gram-positive and Gram-negative bacteria. Also has antimicrobial activity against S.cerevisiae. Has insecticidal and non-hemolytic activity. In Neoponera inversa (Ant), this protein is U1-poneritoxin-Ni3b.